Here is a 314-residue protein sequence, read N- to C-terminus: Protoheme IX farnesyltransferase (314 aa).

The next 8 membrane-spanning stretches (helical) occupy residues 30–50 (VMSL…VSVH), 51–71 (PVIG…SGAL), 122–142 (FLAA…YSMW), 151–171 (IVIG…IATG), 178–198 (WLMF…LALF), 224–244 (IIAY…SAIG), 247–267 (VYLA…IDIW), and 285–305 (FFRL…LESA).

Belongs to the UbiA prenyltransferase family. Protoheme IX farnesyltransferase subfamily. Interacts with CtaA.

It localises to the cell inner membrane. It carries out the reaction heme b + (2E,6E)-farnesyl diphosphate + H2O = Fe(II)-heme o + diphosphate. Its pathway is porphyrin-containing compound metabolism; heme O biosynthesis; heme O from protoheme: step 1/1. Functionally, converts heme B (protoheme IX) to heme O by substitution of the vinyl group on carbon 2 of heme B porphyrin ring with a hydroxyethyl farnesyl side group. In Roseobacter denitrificans (strain ATCC 33942 / OCh 114) (Erythrobacter sp. (strain OCh 114)), this protein is Protoheme IX farnesyltransferase.